Here is a 658-residue protein sequence, read N- to C-terminus: ATP-dependent RNA helicase DDX3Y (658 aa).

The span at 1 to 10 (MSHVVVKNDP) shows a compositional bias: basic and acidic residues. Residues 1–141 (MSHVVVKNDP…DDWSKPLPPS (141 aa)) are disordered. N-acetylserine is present on Ser-2. Positions 15–34 (QLANLDLNSEKQSGGASTAS) are enriched in polar residues. Basic and acidic residues predominate over residues 44–68 (RNREASKGFHDKDSSGWSCSKDKDA). The residue at position 55 (Lys-55) is an N6-acetyllysine. 3 positions are modified to phosphoserine: Ser-81, Ser-85, and Ser-89. Residues 93–128 (GRFDDRGRSDYDGIGNRDRPGFGRFERSGHSRWCDK) show a composition bias toward basic and acidic residues. Arg-100 is subject to Omega-N-methylarginine. Phosphoserine is present on Ser-101. Phosphotyrosine is present on Tyr-103. Arg-109 bears the Omega-N-methylarginine mark. Ser-129 and Ser-181 each carry phosphoserine. The Q motif motif lies at 178-206 (ENFSDIDMGEIIMGNIELTRYTRPTPVQK). 198–205 (YTRPTPVQ) contacts ATP. The region spanning 209–401 (IPIIKGKRDL…RDFLDEYIFL (193 aa)) is the Helicase ATP-binding domain. Lys-213 is covalently cross-linked (Glycyl lysine isopeptide (Lys-Gly) (interchain with G-Cter in SUMO2)). 222–229 (AQTGSGKT) is an ATP binding site. The short motif at 345–348 (DEAD) is the DEAD box element. Residues 412-573 (NITQKVVWVE…EVPSWLENMA (162 aa)) form the Helicase C-terminal domain. Ser-454 is subject to Phosphoserine. At Arg-588 the chain carries Omega-N-methylarginine. Ser-590 and Ser-601 each carry phosphoserine. The disordered stretch occupies residues 597–625 (DYRQSSGSSSSGFGASRGSSSRSGGSGYG). Residues 601–619 (SSGSSSSGFGASRGSSSRS) show a composition bias toward low complexity. Omega-N-methylarginine is present on residues Arg-613 and Arg-628.

The protein belongs to the DEAD box helicase family. DDX3/DED1 subfamily. May interact with TDRD3.

It is found in the cytoplasm. The protein localises to the nucleus. It carries out the reaction ATP + H2O = ADP + phosphate + H(+). Probable ATP-dependent RNA helicase. May play a role in spermatogenesis. In Pongo abelii (Sumatran orangutan), this protein is ATP-dependent RNA helicase DDX3Y (DDX3Y).